The chain runs to 298 residues: Probable GTP 3',8-cyclase (298 aa).

The Radical SAM core domain occupies 4-221; that stretch reads RYGREIRSFR…VFTRKFMQNR (218 aa). Arg-13 provides a ligand contact to GTP. [4Fe-4S] cluster contacts are provided by Cys-20 and Cys-24. Residue Tyr-26 coordinates S-adenosyl-L-methionine. Cys-27 is a binding site for [4Fe-4S] cluster. Residue Lys-61 participates in GTP binding. S-adenosyl-L-methionine is bound at residue Gly-65. Thr-91 provides a ligand contact to GTP. Position 115 (Ser-115) interacts with S-adenosyl-L-methionine. Lys-152 is a GTP binding site. Residues Cys-243 and Cys-246 each coordinate [4Fe-4S] cluster. Position 248 to 250 (248 to 250) interacts with GTP; that stretch reads RIR. Cys-260 contacts [4Fe-4S] cluster.

It belongs to the radical SAM superfamily. MoaA family. Requires [4Fe-4S] cluster as cofactor.

The catalysed reaction is GTP + AH2 + S-adenosyl-L-methionine = (8S)-3',8-cyclo-7,8-dihydroguanosine 5'-triphosphate + 5'-deoxyadenosine + L-methionine + A + H(+). It functions in the pathway cofactor biosynthesis; molybdopterin biosynthesis. Catalyzes the cyclization of GTP to (8S)-3',8-cyclo-7,8-dihydroguanosine 5'-triphosphate. This is Probable GTP 3',8-cyclase from Methanococcus maripaludis (strain C7 / ATCC BAA-1331).